Here is a 124-residue protein sequence, read N- to C-terminus: Testis-expressed protein 54 (124 aa).

A compositionally biased stretch (basic and acidic residues) spans 1–10 (MGCCQDKDFE). Disordered stretches follow at residues 1–77 (MGCC…SNES) and 90–124 (FGRR…PEKG). The span at 11-30 (MSDEQSKEEESEDGREDETT) shows a compositional bias: acidic residues. Basic and acidic residues-rich tracts occupy residues 34–50 (RGPR…RGEL) and 101–124 (RQPD…PEKG).

As to expression, expressed in Testis.

In Homo sapiens (Human), this protein is Testis-expressed protein 54.